Here is a 255-residue protein sequence, read N- to C-terminus: Poxin (255 aa).

The protein belongs to the poxin family. Highly divergent.

The catalysed reaction is 2',3'-cGAMP + H2O = Gp(2'-5')Ap(3') + H(+). In terms of biological role, nuclease that cleaves 2',3'-cGAMP. This is Poxin from Bombyx mori (Silk moth).